A 242-amino-acid polypeptide reads, in one-letter code: Caffeoyl-CoA O-methyltransferase 4 (242 aa).

Lysine 16 serves as a coordination point for substrate. Residues threonine 58, glutamate 80, 82–83 (GV), serine 88, aspartate 106, and alanine 135 each bind S-adenosyl-L-methionine. Aspartate 158 contributes to the substrate binding site. Residue aspartate 158 participates in a divalent metal cation binding. Residue aspartate 160 coordinates S-adenosyl-L-methionine. Aspartate 184 and asparagine 185 together coordinate a divalent metal cation. Asparagine 189 serves as a coordination point for substrate.

The protein belongs to the class I-like SAM-binding methyltransferase superfamily. Cation-dependent O-methyltransferase family. CCoAMT subfamily. The cofactor is Mg(2+). As to expression, mostly expressed in the bottom and middle parts of the stems.

The catalysed reaction is (E)-caffeoyl-CoA + S-adenosyl-L-methionine = (E)-feruloyl-CoA + S-adenosyl-L-homocysteine + H(+). It functions in the pathway aromatic compound metabolism; phenylpropanoid biosynthesis. Functionally, methylates caffeoyl-CoA to feruloyl-CoA and 5-hydroxyferuloyl-CoA to sinapoyl-CoA. Plays a role in the synthesis of feruloylated polysaccharides. Involved in the reinforcement of the plant cell wall. Also involved in the responding to wounding or pathogen challenge by the increased formation of cell wall-bound ferulic acid polymers. This Nicotiana tabacum (Common tobacco) protein is Caffeoyl-CoA O-methyltransferase 4 (CCOAOMT4).